The following is a 247-amino-acid chain: Caffeoyl-CoA O-methyltransferase 2 (247 aa).

Position 21 (Lys-21) interacts with substrate. S-adenosyl-L-methionine contacts are provided by residues Thr-63, Glu-85, 87–88 (GV), Ser-93, Asp-111, and Ala-140. Residue Asp-163 coordinates substrate. Asp-163 is a binding site for a divalent metal cation. An S-adenosyl-L-methionine-binding site is contributed by Asp-165. A divalent metal cation is bound by residues Asp-189 and Asn-190. Asn-194 is a substrate binding site.

It belongs to the class I-like SAM-binding methyltransferase superfamily. Cation-dependent O-methyltransferase family. CCoAMT subfamily. A divalent metal cation is required as a cofactor.

It catalyses the reaction (E)-caffeoyl-CoA + S-adenosyl-L-methionine = (E)-feruloyl-CoA + S-adenosyl-L-homocysteine + H(+). The protein operates within aromatic compound metabolism; phenylpropanoid biosynthesis. In terms of biological role, methylates caffeoyl-CoA to feruloyl-CoA and 5-hydroxyferuloyl-CoA to sinapoyl-CoA. Plays a role in the synthesis of feruloylated polysaccharides. Involved in the reinforcement of the plant cell wall. Also involved in the responding to wounding or pathogen challenge by the increased formation of cell wall-bound ferulic acid polymers. In Eucalyptus globulus (Tasmanian blue gum), this protein is Caffeoyl-CoA O-methyltransferase 2 (CCOAOMT2).